Consider the following 251-residue polypeptide: Endoglucanase CX (251 aa).

This sequence belongs to the glycosyl hydrolase 9 (cellulase E) family.

It carries out the reaction Endohydrolysis of (1-&gt;4)-beta-D-glucosidic linkages in cellulose, lichenin and cereal beta-D-glucans.. Functionally, degrades carboxymethylcellulose (CMC). The polypeptide is Endoglucanase CX (Prunus persica (Peach)).